The chain runs to 244 residues: 1-(5-phosphoribosyl)-5-[(5-phosphoribosylamino)methylideneamino] imidazole-4-carboxamide isomerase (244 aa).

The active-site Proton acceptor is the Asp10. The Proton donor role is filled by Asp132.

It belongs to the HisA/HisF family.

It localises to the cytoplasm. It catalyses the reaction 1-(5-phospho-beta-D-ribosyl)-5-[(5-phospho-beta-D-ribosylamino)methylideneamino]imidazole-4-carboxamide = 5-[(5-phospho-1-deoxy-D-ribulos-1-ylimino)methylamino]-1-(5-phospho-beta-D-ribosyl)imidazole-4-carboxamide. It participates in amino-acid biosynthesis; L-histidine biosynthesis; L-histidine from 5-phospho-alpha-D-ribose 1-diphosphate: step 4/9. This is 1-(5-phosphoribosyl)-5-[(5-phosphoribosylamino)methylideneamino] imidazole-4-carboxamide isomerase from Xanthomonas oryzae pv. oryzae (strain MAFF 311018).